Here is a 455-residue protein sequence, read N- to C-terminus: MIPARDTIAAVATAPGRGGVGIVRVSGPRARAIAITLSGREPTPRHAHYGPFHADDGEVIDEGLLLFFPGPHSFTGEDVLELHGHGGPVVLDMLLQRCVDLGVRLARPGEFSERAFLNDKLDLAQAEAIADLIEASSAQAARNAVRSLQGEFSRRVHQLTERLIQLRIYVEAAIDFPEEEIDFLADGHVLAQLDGVRTELSTVLREAGQGALLRDGMTVVIAGRPNAGKSSLLNALAGREAAIVTDIAGTTRDVLREHILIDGMPLHVVDTAGLRDTEDQVERIGVQRALSAIGEADRILLVVDASAPEASDPSALWPEFLDFSPEPGKVTLIRNKADLTGEAIVLRCDNDGQATLSLCARSGEGLELLREHLKHCMGYEQTAESSFSARRRHLDALRLADEHLRHGHDQLTLAGAGELLAEDLRLAQQALGEITGAFSSDDLLGRIFSSFCIGK.

(6S)-5-formyl-5,6,7,8-tetrahydrofolate is bound by residues arginine 24, glutamate 81, and lysine 120. Residues 216–378 enclose the TrmE-type G domain; the sequence is GMTVVIAGRP…LREHLKHCMG (163 aa). Asparagine 226 lines the K(+) pocket. GTP contacts are provided by residues 226–231, 245–251, 270–273, and 335–338; these read NAGKSS, TDIAGTT, DTAG, and NKAD. Serine 230 contacts Mg(2+). Residues threonine 245, isoleucine 247, and threonine 250 each contribute to the K(+) site. Threonine 251 contacts Mg(2+). Residue lysine 455 coordinates (6S)-5-formyl-5,6,7,8-tetrahydrofolate.

This sequence belongs to the TRAFAC class TrmE-Era-EngA-EngB-Septin-like GTPase superfamily. TrmE GTPase family. Homodimer. Heterotetramer of two MnmE and two MnmG subunits. Requires K(+) as cofactor.

It localises to the cytoplasm. Functionally, exhibits a very high intrinsic GTPase hydrolysis rate. Involved in the addition of a carboxymethylaminomethyl (cmnm) group at the wobble position (U34) of certain tRNAs, forming tRNA-cmnm(5)s(2)U34. In Stutzerimonas stutzeri (strain A1501) (Pseudomonas stutzeri), this protein is tRNA modification GTPase MnmE.